A 710-amino-acid chain; its full sequence is MLLAAGTRYAYRLCGRRAAAALQGRAGRSCARSVSTSWSPVGAAFNVKPQGHLWDLLGERRGLFGVPELSTPEGFQVAQEEALRKTEWLVERACSTPPGPQTVLIFDELSDCLCRVADLADFVKIGHPEQAFREAAQEACRSIGTMVEKLNTNVELYQSLQKLLDDKKLMDSLDAETRRVAELFMFDFEISGIHLDEEKRRRAVDLNVKILDLSSAFLMGTNFPIKIQKHLLPEHIQHHFARDGRHLVIDGLHAEASDDLVREAAYKIFLYPNADQLKCLEELLSSRDLLANLVGYLPFPTGPPGTIAQTPETVMQFLEKLSEKLCERTRKDFEMMQGMKTKLNPQNSELMPWDPPYYSGVIRAERYNIEPSLYCPFLSLGACMEGLNVLFNRLLGVTLYAEQPFKGEVWCIDVRKLAVVHESEGLLGYIYCDFFQRANKPQQDCHFTIRGGRLKEDGSYQLPVVVLMLNLPHASRDFPTLLTPGMMENLFHEMGHAMHSMLGRTRYQHVTGTRCPTDFAEVPSILMEYFSNDYRVVSQFAKHYQTGQPLPKAMVSRLCESKKVCAAAEMQLQVFYAALDQIYHGQHPLKKSTTDILMETQEQFYGLPYVPDTAWQLRFSHLVGYGAKYYSYLMSRAVASMVWKECFLQDPFNRAAGERYRREMLAHGGGKEPMLMIQGMLQKCPSIDDFVDALVSDLNLDFETFFMDSK.

Residues 1–33 constitute a mitochondrion transit peptide; that stretch reads MLLAAGTRYAYRLCGRRAAAALQGRAGRSCARS. Lysine 124 carries the N6-acetyllysine modification. Histidine 492 serves as a coordination point for Zn(2+). The active site involves glutamate 493. Histidine 496 and histidine 499 together coordinate Zn(2+).

It belongs to the peptidase M3 family. Monomer. Requires Zn(2+) as cofactor.

It is found in the mitochondrion matrix. It catalyses the reaction Release of an N-terminal octapeptide as second stage of processing of some proteins imported into the mitochondrion.. Its activity is regulated as follows. Activity is divalent cation-dependent. It is stimulated by manganese, magnesium or calcium ions and reversibly inhibited by zinc, cobalt and iron. In terms of biological role, cleaves proteins, imported into the mitochondrion, to their mature size. This chain is Mitochondrial intermediate peptidase (Mipep), found in Rattus norvegicus (Rat).